The primary structure comprises 262 residues: MLLGVNIDHIATLREARKINEPDPLEAVFLAKRAGAFQITIHLREDRRHIHDYDVERIVESSFLPVNVECSTDKQIVDLLCELRPHRITLVPEKREEVTTEGGLDLLGRFEILKSRIAQFRENDIAVSLFVDPDITSIELSKELGADMVELHTGTFANLHLMLRSNLPKTPHAIPALEMDRRSLSLAYRESLLTLQKAAQKANTLGIEVAAGHGLNYQNVSEIVKIPEIIELNIGHSLIARSIFTGFEAAVREMVELLGRGD.

Asparagine 6 serves as a coordination point for 3-amino-2-oxopropyl phosphate. 8 to 9 provides a ligand contact to 1-deoxy-D-xylulose 5-phosphate; that stretch reads DH. Arginine 17 contacts 3-amino-2-oxopropyl phosphate. The Proton acceptor role is filled by histidine 42. 1-deoxy-D-xylulose 5-phosphate is bound by residues arginine 44 and histidine 49. Glutamate 69 functions as the Proton acceptor in the catalytic mechanism. Residue threonine 99 participates in 1-deoxy-D-xylulose 5-phosphate binding. Histidine 213 serves as the catalytic Proton donor. 3-amino-2-oxopropyl phosphate-binding positions include glycine 214 and 235-236; that span reads GH.

This sequence belongs to the PNP synthase family. In terms of assembly, homooctamer; tetramer of dimers.

The protein resides in the cytoplasm. It carries out the reaction 3-amino-2-oxopropyl phosphate + 1-deoxy-D-xylulose 5-phosphate = pyridoxine 5'-phosphate + phosphate + 2 H2O + H(+). It participates in cofactor biosynthesis; pyridoxine 5'-phosphate biosynthesis; pyridoxine 5'-phosphate from D-erythrose 4-phosphate: step 5/5. In terms of biological role, catalyzes the complicated ring closure reaction between the two acyclic compounds 1-deoxy-D-xylulose-5-phosphate (DXP) and 3-amino-2-oxopropyl phosphate (1-amino-acetone-3-phosphate or AAP) to form pyridoxine 5'-phosphate (PNP) and inorganic phosphate. This is Pyridoxine 5'-phosphate synthase from Wolinella succinogenes (strain ATCC 29543 / DSM 1740 / CCUG 13145 / JCM 31913 / LMG 7466 / NCTC 11488 / FDC 602W) (Vibrio succinogenes).